The sequence spans 218 residues: NAD(P)H-quinone oxidoreductase subunit U, chloroplastic (218 aa).

The N-terminal 53 residues, 1–53, are a transit peptide targeting the chloroplast; sequence MASLSTITQPSLVHIPGESVLHHVPSTCSFPWKPTINTKRIICSPARNSSEVS. Residues 47 to 72 form a disordered region; the sequence is RNSSEVSAEAETEGGSSTAVDEAPKE. Residues 95–159 enclose the J domain; it reads DHYGRLGIFR…EERRMYDWSL (65 aa). A helical membrane pass occupies residues 197 to 217; the sequence is ILGYFIGAWLVLGVALSVAFN.

As to quaternary structure, part of the chloroplast NDH complex, composed of a mixture of chloroplast and nucleus encoded subunits. Component of the electron donor-binding subcomplex, at least composed of NDHS, NDHT and NDHU.

Its subcellular location is the plastid. The protein resides in the chloroplast thylakoid membrane. It carries out the reaction a plastoquinone + NADH + (n+1) H(+)(in) = a plastoquinol + NAD(+) + n H(+)(out). The enzyme catalyses a plastoquinone + NADPH + (n+1) H(+)(in) = a plastoquinol + NADP(+) + n H(+)(out). NDH shuttles electrons from NAD(P)H:plastoquinone, via FMN and iron-sulfur (Fe-S) centers, to quinones in the photosynthetic chain and possibly in a chloroplast respiratory chain. The immediate electron acceptor for the enzyme in this species is believed to be plastoquinone. Couples the redox reaction to proton translocation, and thus conserves the redox energy in a proton gradient. In Arabidopsis thaliana (Mouse-ear cress), this protein is NAD(P)H-quinone oxidoreductase subunit U, chloroplastic.